Reading from the N-terminus, the 125-residue chain is Profilin-P (125 aa).

Serine 2 carries the post-translational modification N-acetylserine.

Belongs to the profilin family. In terms of assembly, occurs in many kinds of cells as a complex with monomeric actin in a 1:1 ratio.

The protein localises to the cytoplasm. It is found in the cytoskeleton. Its function is as follows. Binds to actin and affects the structure of the cytoskeleton. At high concentrations, profilin prevents the polymerization of actin, whereas it enhances it at low concentrations. By binding to PIP2, it inhibits the formation of IP3 and DG. This Physarum polycephalum (Slime mold) protein is Profilin-P (PROP).